Consider the following 911-residue polypeptide: Chitin synthase G (911 aa).

Disordered stretches follow at residues 1–66 and 107–138; these read MAYQ…VSGY and GRVA…GGLR. Basic and acidic residues predominate over residues 12-34; the sequence is PHYDDNGHRLQDLPHGSYEEEAS. Residues 54-66 show a composition bias toward polar residues; that stretch reads QHGSSTTRPVSGY. The next 6 membrane-spanning stretches (helical) occupy residues 579-599, 624-644, 659-679, 711-731, 840-860, and 879-899; these read IFST…TTVI, IINT…FILA, SFVV…YLVV, IIII…FMYL, LVTF…SDGV, and ALLW…CWFL.

This sequence belongs to the chitin synthase family. Class III subfamily.

The protein resides in the cell membrane. It catalyses the reaction [(1-&gt;4)-N-acetyl-beta-D-glucosaminyl](n) + UDP-N-acetyl-alpha-D-glucosamine = [(1-&gt;4)-N-acetyl-beta-D-glucosaminyl](n+1) + UDP + H(+). In terms of biological role, polymerizes chitin, a structural polymer of the cell wall and septum, by transferring the sugar moiety of UDP-GlcNAc to the non-reducing end of the growing chitin polymer. This Aspergillus fumigatus (strain ATCC MYA-4609 / CBS 101355 / FGSC A1100 / Af293) (Neosartorya fumigata) protein is Chitin synthase G (chsG).